The following is a 338-amino-acid chain: 1-aminocyclopropane-1-carboxylate deaminase (338 aa).

Lys51 carries the post-translational modification N6-(pyridoxal phosphate)lysine. Catalysis depends on Ser78, which acts as the Nucleophile.

This sequence belongs to the ACC deaminase/D-cysteine desulfhydrase family. As to quaternary structure, homotrimer. Requires pyridoxal 5'-phosphate as cofactor.

The catalysed reaction is 1-aminocyclopropane-1-carboxylate + H2O = 2-oxobutanoate + NH4(+). In terms of biological role, catalyzes a cyclopropane ring-opening reaction, the irreversible conversion of 1-aminocyclopropane-1-carboxylate (ACC) to ammonia and alpha-ketobutyrate. Allows growth on ACC as a nitrogen source. This chain is 1-aminocyclopropane-1-carboxylate deaminase, found in Pseudomonas fluorescens.